Reading from the N-terminus, the 492-residue chain is Phytoene desaturase (lycopene-forming) (492 aa).

FAD is bound at residue 5–38 (VVIGAGFGGLALAIRLQAAGIPTVLLEQRDKPGG).

Belongs to the carotenoid/retinoid oxidoreductase family. Requires FAD as cofactor.

It carries out the reaction 15-cis-phytoene + 4 A = all-trans-lycopene + 4 AH2. It functions in the pathway carotenoid biosynthesis; lycopene biosynthesis. Functionally, this enzyme converts phytoene into lycopene via the intermediaries of phytofluene, zeta-carotene and neurosporene by the introduction of four double bonds. The chain is Phytoene desaturase (lycopene-forming) (crtI) from Pseudescherichia vulneris (Escherichia vulneris).